The primary structure comprises 255 residues: Indole-3-glycerol phosphate synthase (255 aa).

Belongs to the TrpC family.

It catalyses the reaction 1-(2-carboxyphenylamino)-1-deoxy-D-ribulose 5-phosphate + H(+) = (1S,2R)-1-C-(indol-3-yl)glycerol 3-phosphate + CO2 + H2O. It participates in amino-acid biosynthesis; L-tryptophan biosynthesis; L-tryptophan from chorismate: step 4/5. The sequence is that of Indole-3-glycerol phosphate synthase from Streptococcus pneumoniae serotype 2 (strain D39 / NCTC 7466).